Consider the following 153-residue polypeptide: Insulin-like growth factor 1.S (153 aa).

Intrachain disulfides connect Cys29/Cys38, Cys54/Cys96, Cys66/Cys109, and Cys100/Cys109. A b region spans residues Gly49 to Thr77. Residues Gly78 to Arg89 form a c region. Residues Gly90–Ala110 form an a region. Residues Pro111–Ala118 are d. The propeptide at Arg119 to Met153 is e peptide. Residues Arg119–Met153 form a disordered region. The segment covering Arg125–Pro138 has biased composition (basic and acidic residues). Positions Lys139–Met153 are enriched in polar residues.

This sequence belongs to the insulin family. In terms of tissue distribution, expressed in adult liver, lung, heart, kidney and peritoneal fat.

The protein localises to the secreted. Functionally, the insulin-like growth factors, isolated from plasma, are structurally and functionally related to insulin but have a much higher growth-promoting activity. Promotes head development by inhibiting Wnt signaling during embryogenesis. Acts as a ligand for IGF1R. Binds to the alpha subunit of IGF1R, leading to the activation of the intrinsic tyrosine kinase activity which autophosphorylates tyrosine residues in the beta subunit thus initiatiating a cascade of down-stream signaling events leading to activation of the PI3K-AKT/PKB and the Ras-MAPK pathways. Binds to integrins. Its binding to integrins and subsequent ternary complex formation with integrins and IGFR1 are essential for IGF1 signaling. The protein is Insulin-like growth factor 1.S of Xenopus laevis (African clawed frog).